The primary structure comprises 393 residues: Phosphoglycerate kinase (393 aa).

Substrate-binding positions include 21–23 (DLN), Arg37, 60–63 (HLGR), Arg115, and Arg148. ATP-binding positions include Lys199, Glu321, and 347 to 350 (GGDT).

Belongs to the phosphoglycerate kinase family. In terms of assembly, monomer.

The protein resides in the cytoplasm. It carries out the reaction (2R)-3-phosphoglycerate + ATP = (2R)-3-phospho-glyceroyl phosphate + ADP. It participates in carbohydrate degradation; glycolysis; pyruvate from D-glyceraldehyde 3-phosphate: step 2/5. The polypeptide is Phosphoglycerate kinase (Dechloromonas aromatica (strain RCB)).